The following is a 367-amino-acid chain: MSTQPTKTSSTKLRIFKWLFIISTLVAIAIPITRLLMHLYGKIDEKMYARIFMSYRVNSADSFMINGRYKAIKAKAYPTSEERNKFNSIAQEGDKAVLLKYPYPEHFSLEPEWHYTLCDDVFYNLWKIRVNVCEYYKNNKQEDIAGLVTPPKEAKVDRFFRQDPKISDDDYKKLFTGTDENGKGWSSAAVQFIDILLNLINKPEECKLKDGKLNEKFQKDLESLVSQLGYSTEDMKNIANEIPNFFIQFGKAFPTVIHSTVYSRFYYFFLFLTINGNFDFSEVEKTDGMKIEEFNKQTMKVMASVFAQIFAKVYEESYNYEIKDAGFMDKVRAYFSVSDNIDNVKDQTKNINTVKEVLIKNKELLSK.

A signal peptide spans 1-29 (MSTQPTKTSSTKLRIFKWLFIISTLVAIA).

As to quaternary structure, interacts with SWP7.

The protein localises to the cytoplasm. Its subcellular location is the spore wall. The protein resides in the spore polar tube. Its function is as follows. Involved in adherence of spores to the host cell surface and in infection efficiency. This chain is Spore wall protein 9, found in Nosema bombycis (strain CQ1 / CVCC 102059) (Microsporidian parasite).